The primary structure comprises 187 residues: Orotate phosphoribosyltransferase (187 aa).

5-phospho-alpha-D-ribose 1-diphosphate-binding positions include arginine 98, lysine 99, lysine 102, histidine 104, and 128-136 (EDVTTTGGS). Residues threonine 132 and arginine 160 each coordinate orotate.

Belongs to the purine/pyrimidine phosphoribosyltransferase family. PyrE subfamily. As to quaternary structure, homodimer. Mg(2+) serves as cofactor.

It carries out the reaction orotidine 5'-phosphate + diphosphate = orotate + 5-phospho-alpha-D-ribose 1-diphosphate. It participates in pyrimidine metabolism; UMP biosynthesis via de novo pathway; UMP from orotate: step 1/2. Functionally, catalyzes the transfer of a ribosyl phosphate group from 5-phosphoribose 1-diphosphate to orotate, leading to the formation of orotidine monophosphate (OMP). This Rhodopseudomonas palustris (strain BisB5) protein is Orotate phosphoribosyltransferase.